The primary structure comprises 524 residues: Zinc finger CCCH-type with G patch domain-containing protein (524 aa).

The interval 105 to 142 (SEESQPLGSNDETSTCSKGSEEEEEEEEEEEDNTSGMK) is disordered. The segment covering 106–122 (EESQPLGSNDETSTCSK) has biased composition (polar residues). The segment covering 125 to 137 (EEEEEEEEEEEDN) has biased composition (acidic residues). The segment at 184-210 (KAMKPCPFFLDGKCLFNDNCRFSHGQV) adopts a C3H1-type zinc-finger fold. The disordered stretch occupies residues 279 to 298 (RGSDSSSSSSSDEEEDGAAE). The region spanning 326–372 (TRGIGSKLLVRMGYEFGKGLGRNAEGRVEPIQAVVLPKGKSLDQCME) is the G-patch domain. 2 disordered regions span residues 375-402 (QRKK…GGAK) and 500-524 (GLQQ…MTEF). The segment covering 376-393 (RKKAGGKHKHKTSKRRPK) has biased composition (basic residues).

It localises to the nucleus. Functionally, transcription repressor that specifically binds the 5'-GGAG[GA]A[GA]A-3' consensus sequence. Represses transcription by recruiting the chromatin multiprotein complex NuRD to target promoters. Negatively regulates expression of EGFR, a gene involved in cell proliferation, survival and migration. The polypeptide is Zinc finger CCCH-type with G patch domain-containing protein (zgpat) (Xenopus laevis (African clawed frog)).